Consider the following 400-residue polypeptide: GTPase-binding protein rid1 (400 aa).

Polar residues predominate over residues 16–27 (LSSDGLSESVNS). A disordered region spans residues 16–47 (LSSDGLSESVNSSDREDSLSFQTPSTPSEDEM). Positions 39–400 (PSTPSEDEMP…PYKLVQTGST (362 aa)) constitute a GBD/FH3 domain.

Its subcellular location is the cytoplasm. This chain is GTPase-binding protein rid1 (rid1), found in Schizosaccharomyces pombe (strain 972 / ATCC 24843) (Fission yeast).